The primary structure comprises 450 residues: Phosphoglucosamine mutase (450 aa).

Ser-101 acts as the Phosphoserine intermediate in catalysis. The Mg(2+) site is built by Ser-101, Asp-240, Asp-242, and Asp-244. Ser-101 is modified (phosphoserine).

It belongs to the phosphohexose mutase family. Mg(2+) is required as a cofactor. In terms of processing, activated by phosphorylation.

It catalyses the reaction alpha-D-glucosamine 1-phosphate = D-glucosamine 6-phosphate. Functionally, catalyzes the conversion of glucosamine-6-phosphate to glucosamine-1-phosphate. The polypeptide is Phosphoglucosamine mutase (Streptococcus uberis (strain ATCC BAA-854 / 0140J)).